The chain runs to 275 residues: Polyamine aminopropyltransferase (275 aa).

One can recognise a PABS domain in the interval 2–235; it reads ELWFTEKQTK…GLWTFTIGSK (234 aa). Q31 serves as a coordination point for S-methyl-5'-thioadenosine. 2 residues coordinate spermidine: H62 and D86. S-methyl-5'-thioadenosine-binding positions include E106 and 137–138; that span reads DG. D155 functions as the Proton acceptor in the catalytic mechanism. Spermidine is bound at residue 155-158; that stretch reads DSTE. S-methyl-5'-thioadenosine is bound at residue P162.

The protein belongs to the spermidine/spermine synthase family. As to quaternary structure, homodimer or homotetramer.

The protein resides in the cytoplasm. It catalyses the reaction S-adenosyl 3-(methylsulfanyl)propylamine + putrescine = S-methyl-5'-thioadenosine + spermidine + H(+). The protein operates within amine and polyamine biosynthesis; spermidine biosynthesis; spermidine from putrescine: step 1/1. Functionally, catalyzes the irreversible transfer of a propylamine group from the amino donor S-adenosylmethioninamine (decarboxy-AdoMet) to putrescine (1,4-diaminobutane) to yield spermidine. This Bacillus cytotoxicus (strain DSM 22905 / CIP 110041 / 391-98 / NVH 391-98) protein is Polyamine aminopropyltransferase.